Here is a 255-residue protein sequence, read N- to C-terminus: Pyrroloquinoline-quinone synthase (255 aa).

Belongs to the PqqC family.

It carries out the reaction 6-(2-amino-2-carboxyethyl)-7,8-dioxo-1,2,3,4,7,8-hexahydroquinoline-2,4-dicarboxylate + 3 O2 = pyrroloquinoline quinone + 2 H2O2 + 2 H2O + H(+). The protein operates within cofactor biosynthesis; pyrroloquinoline quinone biosynthesis. In terms of biological role, ring cyclization and eight-electron oxidation of 3a-(2-amino-2-carboxyethyl)-4,5-dioxo-4,5,6,7,8,9-hexahydroquinoline-7,9-dicarboxylic-acid to PQQ. In Cereibacter sphaeroides (strain ATCC 17029 / ATH 2.4.9) (Rhodobacter sphaeroides), this protein is Pyrroloquinoline-quinone synthase.